The following is a 63-amino-acid chain: Cecropin-A1 (63 aa).

Residues 1–23 (MNFYNIFVFVALILAITIGQSEA) form the signal peptide. Arg-62 bears the Arginine amide mark.

This sequence belongs to the cecropin family.

Its subcellular location is the secreted. Its function is as follows. Cecropins have lytic and antibacterial activity against several Gram-positive and Gram-negative bacteria. This Drosophila sechellia (Fruit fly) protein is Cecropin-A1 (CecA1).